Consider the following 291-residue polypeptide: Nucleotide-binding protein lin2617 (291 aa).

Residue 13 to 20 (GMSGAGKT) coordinates ATP. 63–66 (DLRG) lines the GTP pocket.

It belongs to the RapZ-like family.

Its function is as follows. Displays ATPase and GTPase activities. The chain is Nucleotide-binding protein lin2617 from Listeria innocua serovar 6a (strain ATCC BAA-680 / CLIP 11262).